Here is a 62-residue protein sequence, read N- to C-terminus: Large ribosomal subunit protein uL29 (62 aa).

The protein belongs to the universal ribosomal protein uL29 family.

In Cytophaga hutchinsonii (strain ATCC 33406 / DSM 1761 / CIP 103989 / NBRC 15051 / NCIMB 9469 / D465), this protein is Large ribosomal subunit protein uL29.